Consider the following 149-residue polypeptide: Large ribosomal subunit protein uL13 (149 aa).

This sequence belongs to the universal ribosomal protein uL13 family. As to quaternary structure, part of the 50S ribosomal subunit.

Functionally, this protein is one of the early assembly proteins of the 50S ribosomal subunit, although it is not seen to bind rRNA by itself. It is important during the early stages of 50S assembly. The polypeptide is Large ribosomal subunit protein uL13 (Bifidobacterium adolescentis (strain ATCC 15703 / DSM 20083 / NCTC 11814 / E194a)).